A 314-amino-acid polypeptide reads, in one-letter code: Ribosomal RNA small subunit methyltransferase A (314 aa).

Residues N29, V31, G56, E77, D107, and N126 each contribute to the S-adenosyl-L-methionine site. The tract at residues 291–314 (PKADDAGDDADAQAKADGAQVSTL) is disordered. Residues 303–314 (QAKADGAQVSTL) are compositionally biased toward low complexity.

This sequence belongs to the class I-like SAM-binding methyltransferase superfamily. rRNA adenine N(6)-methyltransferase family. RsmA subfamily.

Its subcellular location is the cytoplasm. The enzyme catalyses adenosine(1518)/adenosine(1519) in 16S rRNA + 4 S-adenosyl-L-methionine = N(6)-dimethyladenosine(1518)/N(6)-dimethyladenosine(1519) in 16S rRNA + 4 S-adenosyl-L-homocysteine + 4 H(+). In terms of biological role, specifically dimethylates two adjacent adenosines (A1518 and A1519) in the loop of a conserved hairpin near the 3'-end of 16S rRNA in the 30S particle. May play a critical role in biogenesis of 30S subunits. This Mycolicibacterium gilvum (strain PYR-GCK) (Mycobacterium gilvum (strain PYR-GCK)) protein is Ribosomal RNA small subunit methyltransferase A.